Reading from the N-terminus, the 1080-residue chain is Serine/threonine-protein kinase KIC1 (1080 aa).

The Protein kinase domain occupies 23–276; that stretch reads FKRTEVIGRG…ADDLLKSKFI (254 aa). Residues 29 to 37 and Lys-52 each bind ATP; that span reads IGRGKFGVV. Asp-144 (proton acceptor) is an active-site residue. Disordered stretches follow at residues 308 to 347, 615 to 760, 787 to 831, and 901 to 956; these read EGSI…EIKR, KARS…LAPP, STLN…LQMP, and SQSI…NTGN. Positions 312–326 are enriched in low complexity; it reads PENEPSKPSEAPKPS. Polar residues predominate over residues 615-626; the sequence is KARSSTVTAGTP. Positions 627-638 are enriched in low complexity; the sequence is SSSSSIQYKSPS. The span at 656–673 shows a compositional bias: polar residues; it reads STITNQKLGSAVASNSGI. Residues 674–689 show a composition bias toward low complexity; sequence SSTPNNSNNYNNNTDS. Polar residues predominate over residues 693–726; it reads RGSSGSNTANSTQMGITNPGNVTKLSTHKASSPS. Ser-735 is subject to Phosphoserine. Polar residues predominate over residues 743 to 756; it reads SPTQNIGHNSTHTN. A compositionally biased stretch (low complexity) spans 787-807; it reads STLNTISGNSSNNLTSSNYFS. The span at 808 to 821 shows a compositional bias: basic and acidic residues; that stretch reads NEKEGSRVNGDFKR. Residues 901-913 show a composition bias toward polar residues; sequence SQSISNRKNSSAS. Positions 918-956 are enriched in low complexity; sequence NILGSSVSGNVSGIGNNNVGSNNNSGPNNSVPLSANTGN.

Belongs to the protein kinase superfamily. Ser/Thr protein kinase family. Interacts with CDC31.

The catalysed reaction is L-seryl-[protein] + ATP = O-phospho-L-seryl-[protein] + ADP + H(+). The enzyme catalyses L-threonyl-[protein] + ATP = O-phospho-L-threonyl-[protein] + ADP + H(+). Functionally, protein kinase involved in morphogenesis and cell integrity. This is Serine/threonine-protein kinase KIC1 (KIC1) from Saccharomyces cerevisiae (strain ATCC 204508 / S288c) (Baker's yeast).